The sequence spans 238 residues: Response regulator receiver protein Anae109_2439 (238 aa).

2 consecutive Response regulatory domains span residues 3–117 (RYLI…AAAR) and 121–228 (LVAV…ERLH). 4-aspartylphosphate occurs at positions 52 and 169.

Post-translationally, is diphosphorylated by GchK.

Its function is as follows. Member of the two-component regulatory system GcHK/Anae109_2439. Is involved in a signal transduction system responding to oxygen availability. The protein is Response regulator receiver protein Anae109_2439 of Anaeromyxobacter sp. (strain Fw109-5).